A 367-amino-acid polypeptide reads, in one-letter code: MEAEVINQLNNTLNDLEKRSEDIRVYMDYQGKKDRLEEVIGLSEDPELWNDPKRAQEIGKERKILEGIVLTLDNIATGIEDNRMLIEMTVEENDEEGFAAVQEDVAGLEKQMADLEFKRMFNQPADPNNCFIDITAGAGGTEAEDWAGMLFRMYSRYAERKGFKIEILEEDDGEIAGINRATIRVEGEYAYGLLRTETGVHRLVRYSPFDSNNKRHTSFASVFVYPEIDDSIEIEINPADLRIDTYRASGAGGQHINKTDSAVRITHEPTGIVVQCQNDRSQHANKAAAMEMLKSKLYELEMRKRNEEKQALEEGKSDVGWGSQIRSYVLDSSRIKDLRTGYEVGNTKAVLDGDLDGFIEASLKQGV.

Position 254 is an N5-methylglutamine (glutamine 254).

This sequence belongs to the prokaryotic/mitochondrial release factor family. In terms of processing, methylated by PrmC. Methylation increases the termination efficiency of RF2.

It localises to the cytoplasm. Peptide chain release factor 2 directs the termination of translation in response to the peptide chain termination codons UGA and UAA. The protein is Peptide chain release factor 2 of Neisseria meningitidis serogroup A / serotype 4A (strain DSM 15465 / Z2491).